Here is a 291-residue protein sequence, read N- to C-terminus: Prepilin leader peptidase/N-methyltransferase (291 aa).

The chain crosses the membrane as a helical span at residues 14-34; it reads LYFSLVFLFSLMIGSFLNVVI. Residues Cys75, Cys78, Cys100, and Cys103 each coordinate Zn(2+). Helical transmembrane passes span 107–127, 131–151, 162–182, 186–206, 232–252, and 262–282; these read ISAR…VVAM, PGWG…LTFI, LTLP…YVPL, VIGA…FKLL, LPIV…GLIL, and IPFG…GDSI.

It belongs to the peptidase A24 family. The cofactor is Zn(2+).

The protein resides in the cell inner membrane. The catalysed reaction is Typically cleaves a -Gly-|-Phe- bond to release an N-terminal, basic peptide of 5-8 residues from type IV prepilin, and then N-methylates the new N-terminal amino group, the methyl donor being S-adenosyl-L-methionine.. In terms of biological role, plays an essential role in type IV pili and type II pseudopili formation by proteolytically removing the leader sequence from substrate proteins and subsequently monomethylating the alpha-amino group of the newly exposed N-terminal phenylalanine. The polypeptide is Prepilin leader peptidase/N-methyltransferase (tapD) (Aeromonas salmonicida (strain A449)).